The following is a 146-amino-acid chain: Large ribosomal subunit protein uL15 (146 aa).

Residues 1–59 are disordered; sequence MRLEELKAPAGANKRTKRVGRGTGSGHGKTSTRGHKGQKSRSGGGVRPGFEGGQMPLQR. Positions 30–39 are enriched in basic residues; that stretch reads TSTRGHKGQK. Residues 42-52 show a composition bias toward gly residues; sequence SGGGVRPGFEG.

Belongs to the universal ribosomal protein uL15 family. As to quaternary structure, part of the 50S ribosomal subunit.

In terms of biological role, binds to the 23S rRNA. The sequence is that of Large ribosomal subunit protein uL15 from Syntrophomonas wolfei subsp. wolfei (strain DSM 2245B / Goettingen).